The sequence spans 123 residues: Nitrogenase-stabilizing/protective protein NifW (123 aa).

The protein belongs to the NifW family. As to quaternary structure, homotrimer; associates with NifD.

May protect the nitrogenase Fe-Mo protein from oxidative damage. This is Nitrogenase-stabilizing/protective protein NifW from Rhodopseudomonas palustris (strain HaA2).